We begin with the raw amino-acid sequence, 527 residues long: Probable bifunctional tRNA threonylcarbamoyladenosine biosynthesis protein (527 aa).

The tract at residues 1 to 324 is kae1; sequence MIVLGLEGTA…YRIDEVDAPW (324 aa). Positions 107, 111, and 128 each coordinate Fe cation. L-threonylcarbamoyladenylate contacts are provided by residues 128–132, Asp-160, Gly-173, Glu-177, and Asn-257; that span reads YVSGG. Asp-285 contributes to the Fe cation binding site. The Protein kinase domain maps to 330-527; that stretch reads VKYRDAGAES…EDIRRRHRYV (198 aa). ATP is bound by residues 333–341 and Lys-354; that span reads RDAGAESRI. The active-site Proton acceptor; for kinase activity is the Asp-445.

In the N-terminal section; belongs to the KAE1 / TsaD family. This sequence in the C-terminal section; belongs to the protein kinase superfamily. Tyr protein kinase family. BUD32 subfamily. As to quaternary structure, component of the KEOPS complex that consists of Kae1, Bud32, Cgi121 and Pcc1; the whole complex dimerizes. The cofactor is Fe(2+).

It is found in the cytoplasm. It carries out the reaction L-seryl-[protein] + ATP = O-phospho-L-seryl-[protein] + ADP + H(+). The catalysed reaction is L-threonyl-[protein] + ATP = O-phospho-L-threonyl-[protein] + ADP + H(+). The enzyme catalyses L-threonylcarbamoyladenylate + adenosine(37) in tRNA = N(6)-L-threonylcarbamoyladenosine(37) in tRNA + AMP + H(+). Its function is as follows. Required for the formation of a threonylcarbamoyl group on adenosine at position 37 (t(6)A37) in tRNAs that read codons beginning with adenine. Is a component of the KEOPS complex that is probably involved in the transfer of the threonylcarbamoyl moiety of threonylcarbamoyl-AMP (TC-AMP) to the N6 group of A37. The Kae1 domain likely plays a direct catalytic role in this reaction. The Bud32 domain probably displays kinase activity that regulates Kae1 function. In Thermoplasma volcanium (strain ATCC 51530 / DSM 4299 / JCM 9571 / NBRC 15438 / GSS1), this protein is Probable bifunctional tRNA threonylcarbamoyladenosine biosynthesis protein.